Here is a 219-residue protein sequence, read N- to C-terminus: Aspartic protease inhibitor 10 (219 aa).

Residues 1 to 23 (MMKCLFLLCLCLVPIVVFSSTFT) form the signal peptide. A propeptide spanning residues 24 to 32 (SQNLIDLPS) is cleaved from the precursor. The short motif at 26 to 31 (NLIDLP) is the Vacuolar targeting signal element. N51 carries N-linked (GlcNAc...) asparagine glycosylation. 2 cysteine pairs are disulfide-bonded: C80–C125 and C173–C184.

The protein belongs to the protease inhibitor I3 (leguminous Kunitz-type inhibitor) family. In tubers and green buds of untreated plants. After abscisic acid treatment or mechanical wounding is mostly accumulated in leaves, to a lesser extent in stems, but not in roots.

In terms of biological role, inhibitor of cathepsin D (aspartic protease) and trypsin (serine protease). Protects the plant by inhibiting proteases of invading organisms. This Solanum tuberosum (Potato) protein is Aspartic protease inhibitor 10 (CDI).